We begin with the raw amino-acid sequence, 168 residues long: Cofilin-1-B (168 aa).

A2 bears the N-acetylalanine mark. The 150-residue stretch at 4-153 (GVMVSDDVVK…NDPCNLADKL (150 aa)) folds into the ADF-H domain. Positions 30–34 (KKRKK) match the Nuclear localization signal motif.

Belongs to the actin-binding proteins ADF family. In terms of processing, inactive when phosphorylated. Phosphorylation levels vary during development. Oocytes contain only the phosphorylated form, and 80-95% of cfl1 protein is phosphorylated in unfertilized eggs. Rapid dephosphorylation occurs within 30 minutes after fertilization. Phosphorylation levels increase again between the morula and blastula stages (5-8 hpf) and then decrease again as gastrulation approaches. Dephosphorylated by pdxp. Expressed diffusely in both animal and vegetal hemispheres of the oocyte. During cleavage, expression accumulates around the cleavage furrow, along the vegetal membrane, and later in the midbody. Strongly expressed in the animal hemisphere during blastula stages, with most cells showing expression by gastrulation. By stage 17, expression is highest in cells of the developing neuroectoderm, and at stage 24 the notochord, neural tube, neural crest, somites and some cells of the archenteron show high expression. By stage 35, expression has declined in the notochord, but remains in the neural tube, epidermis and a layer of cells in the archenteron. Also highly expressed in the retina and neuronal cell bodies at the base of the cement gland but not the cement gland itself. At stage 38, expression is widespread, being highest in the nervous system and retina. In the adult, expression is high in the brain, heart, oocyte, stomach, and low in skeletal muscle.

It localises to the nucleus matrix. It is found in the cytoplasm. Its subcellular location is the cytoskeleton. The protein resides in the cell cortex. The protein localises to the membrane. Functionally, may play a role in the regulation of cell morphology and cytoskeletal organization. Binds to F-actin and exhibits pH-sensitive F-actin depolymerizing activity. Required for formation of the cleavage furrow during cytokinesis. This is Cofilin-1-B (cfl1-b) from Xenopus laevis (African clawed frog).